Reading from the N-terminus, the 380-residue chain is Guanine nucleotide-binding protein subunit beta (380 aa).

7 WD repeats span residues 64–103 (GHSG…KTHA), 106–145 (LHCP…DRDG), 155–195 (GHKG…RISI), 203–243 (GHTA…RAVR), 247–286 (GHEG…QLQV), 296–335 (NELP…VVLN), and 342–380 (SHEG…RKIV).

This sequence belongs to the WD repeat G protein beta family. As to quaternary structure, g proteins are composed of 3 units, alpha, beta and gamma. Interacts with the gamma subunits RGG1 and RGG2.

It is found in the cell membrane. Its function is as follows. Guanine nucleotide-binding proteins (G proteins) are involved as modulators or transducers in various transmembrane signaling systems. The beta and gamma chains are required for the GTPase activity, for replacement of GDP by GTP, and for G protein-effector interaction. The polypeptide is Guanine nucleotide-binding protein subunit beta (Oryza sativa subsp. indica (Rice)).